The primary structure comprises 96 residues: Small ubiquitin-related modifier 2 (96 aa).

Residue Lys-11 forms a Glycyl lysine isopeptide (Lys-Gly) (interchain with G-Cter in SUMO) linkage. The region spanning 16–96 (DHINLKVAGQ…FQQQTGGHRI (81 aa)) is the Ubiquitin-like domain. Gly-93 is covalently cross-linked (Glycyl lysine isopeptide (Gly-Lys) (interchain with K-? in acceptor proteins)). A propeptide spanning residues 94 to 96 (HRI) is cleaved from the precursor.

Belongs to the ubiquitin family. SUMO subfamily. As to quaternary structure, interacts with sae2 and ube2i. Covalently attached to a number of proteins. In terms of processing, polymeric chains can be formed through Lys-11 cross-linking. Post-translationally, cleavage of precursor form by a sentrin-specific protease is necessary for function.

Its subcellular location is the nucleus. Functionally, ubiquitin-like protein that can be covalently attached to proteins as a monomer or as a lysine-linked polymer. Covalent attachment via an isopeptide bond to its substrates requires prior activation by the E1 complex sae1-sae2 and linkage to the E2 enzyme ube2i, and can be promoted by an E3 ligase such as pias1-4. This post-translational modification on lysine residues of proteins plays a crucial role in a number of cellular processes such as nuclear transport, DNA replication and repair, mitosis and signal transduction. Polymeric sumo2 chains are also susceptible to polyubiquitination which functions as a signal for proteasomal degradation of modified proteins. In Danio rerio (Zebrafish), this protein is Small ubiquitin-related modifier 2.